The primary structure comprises 863 residues: DNA mismatch repair protein MutS (863 aa).

607–614 (GPNMAGKS) contacts ATP.

It belongs to the DNA mismatch repair MutS family.

Its function is as follows. This protein is involved in the repair of mismatches in DNA. It is possible that it carries out the mismatch recognition step. This protein has a weak ATPase activity. The sequence is that of DNA mismatch repair protein MutS from Caldicellulosiruptor saccharolyticus (strain ATCC 43494 / DSM 8903 / Tp8T 6331).